The chain runs to 294 residues: Protein ATC1/LIC4 (294 aa).

Positions 114 to 178 are disordered; sequence YTGKASLDKS…SSSLASSDAN (65 aa). Over residues 130-145 the composition is skewed to basic and acidic residues; that stretch reads HKPDKEQKNYKIDKPT. Low complexity predominate over residues 153–175; it reads LKTTNEPMLSPASLSPSSSLASS.

The protein resides in the cytoplasm. The protein localises to the nucleus. Involved in cation homeostasis and in the regulation of the cation stress signaling cascades. Also involved in bipolar budding. In Saccharomyces cerevisiae (strain ATCC 204508 / S288c) (Baker's yeast), this protein is Protein ATC1/LIC4 (ATC1).